We begin with the raw amino-acid sequence, 443 residues long: Ribosomal protein uS12 methylthiotransferase RimO (443 aa).

The region spanning proline 11 to proline 121 is the MTTase N-terminal domain. 6 residues coordinate [4Fe-4S] cluster: cysteine 20, cysteine 56, cysteine 85, cysteine 152, cysteine 156, and cysteine 159. The 238-residue stretch at leucine 138 to alanine 375 folds into the Radical SAM core domain. A TRAM domain is found at aspartate 378–valine 443.

This sequence belongs to the methylthiotransferase family. RimO subfamily. Requires [4Fe-4S] cluster as cofactor.

The protein resides in the cytoplasm. It catalyses the reaction L-aspartate(89)-[ribosomal protein uS12]-hydrogen + (sulfur carrier)-SH + AH2 + 2 S-adenosyl-L-methionine = 3-methylsulfanyl-L-aspartate(89)-[ribosomal protein uS12]-hydrogen + (sulfur carrier)-H + 5'-deoxyadenosine + L-methionine + A + S-adenosyl-L-homocysteine + 2 H(+). In terms of biological role, catalyzes the methylthiolation of an aspartic acid residue of ribosomal protein uS12. In Thiobacillus denitrificans (strain ATCC 25259 / T1), this protein is Ribosomal protein uS12 methylthiotransferase RimO.